Here is a 339-residue protein sequence, read N- to C-terminus: Ketol-acid reductoisomerase (NADP(+)) (339 aa).

The 182-residue stretch at 1–182 (MRVYYDRDAD…GGGRAGIIET (182 aa)) folds into the KARI N-terminal Rossmann domain. Residues 24-27 (YGSQ), R48, S51, S53, and 83-86 (DELQ) each bind NADP(+). Residue H108 is part of the active site. G134 serves as a coordination point for NADP(+). The region spanning 183–328 (TFREECETDL…AKLRDMMPWI (146 aa)) is the KARI C-terminal knotted domain. The Mg(2+) site is built by D191, E195, E227, and E231. S252 serves as a coordination point for substrate.

Belongs to the ketol-acid reductoisomerase family. Mg(2+) serves as cofactor.

It carries out the reaction (2R)-2,3-dihydroxy-3-methylbutanoate + NADP(+) = (2S)-2-acetolactate + NADPH + H(+). The enzyme catalyses (2R,3R)-2,3-dihydroxy-3-methylpentanoate + NADP(+) = (S)-2-ethyl-2-hydroxy-3-oxobutanoate + NADPH + H(+). Its pathway is amino-acid biosynthesis; L-isoleucine biosynthesis; L-isoleucine from 2-oxobutanoate: step 2/4. It participates in amino-acid biosynthesis; L-valine biosynthesis; L-valine from pyruvate: step 2/4. Involved in the biosynthesis of branched-chain amino acids (BCAA). Catalyzes an alkyl-migration followed by a ketol-acid reduction of (S)-2-acetolactate (S2AL) to yield (R)-2,3-dihydroxy-isovalerate. In the isomerase reaction, S2AL is rearranged via a Mg-dependent methyl migration to produce 3-hydroxy-3-methyl-2-ketobutyrate (HMKB). In the reductase reaction, this 2-ketoacid undergoes a metal-dependent reduction by NADPH to yield (R)-2,3-dihydroxy-isovalerate. The chain is Ketol-acid reductoisomerase (NADP(+)) from Nitrobacter hamburgensis (strain DSM 10229 / NCIMB 13809 / X14).